A 763-amino-acid chain; its full sequence is 5-methyltetrahydropteroyltriglutamate--homocysteine methyltransferase (763 aa).

Residues 16-19 (RELK) and Lys-114 each bind 5-methyltetrahydropteroyltri-L-glutamate. L-homocysteine is bound by residues 438-440 (IGS) and Glu-491. Residues 438–440 (IGS) and Glu-491 each bind L-methionine. Residues 522-523 (RC) and Trp-568 contribute to the 5-methyltetrahydropteroyltri-L-glutamate site. Residue Asp-606 coordinates L-homocysteine. Asp-606 contacts L-methionine. Glu-612 serves as a coordination point for 5-methyltetrahydropteroyltri-L-glutamate. The Zn(2+) site is built by His-648, Cys-650, and Glu-672. Catalysis depends on His-701, which acts as the Proton donor. A Zn(2+)-binding site is contributed by Cys-733.

It belongs to the vitamin-B12 independent methionine synthase family. Requires Zn(2+) as cofactor.

It catalyses the reaction 5-methyltetrahydropteroyltri-L-glutamate + L-homocysteine = tetrahydropteroyltri-L-glutamate + L-methionine. It functions in the pathway amino-acid biosynthesis; L-methionine biosynthesis via de novo pathway; L-methionine from L-homocysteine (MetE route): step 1/1. Its function is as follows. Catalyzes the transfer of a methyl group from 5-methyltetrahydrofolate to homocysteine resulting in methionine formation. The polypeptide is 5-methyltetrahydropteroyltriglutamate--homocysteine methyltransferase (Parvibaculum lavamentivorans (strain DS-1 / DSM 13023 / NCIMB 13966)).